The sequence spans 419 residues: 5-methylthioadenosine/S-adenosylhomocysteine deaminase (419 aa).

2 residues coordinate Zn(2+): His58 and His60. Substrate contacts are provided by Glu87 and His179. His206 serves as a coordination point for Zn(2+). Substrate-binding residues include Glu209 and Asp294. Residue Asp294 participates in Zn(2+) binding.

The protein belongs to the metallo-dependent hydrolases superfamily. MTA/SAH deaminase family. Requires Zn(2+) as cofactor.

It catalyses the reaction S-adenosyl-L-homocysteine + H2O + H(+) = S-inosyl-L-homocysteine + NH4(+). The enzyme catalyses S-methyl-5'-thioadenosine + H2O + H(+) = S-methyl-5'-thioinosine + NH4(+). Functionally, catalyzes the deamination of 5-methylthioadenosine and S-adenosyl-L-homocysteine into 5-methylthioinosine and S-inosyl-L-homocysteine, respectively. Is also able to deaminate adenosine. The protein is 5-methylthioadenosine/S-adenosylhomocysteine deaminase of Pyrococcus furiosus (strain ATCC 43587 / DSM 3638 / JCM 8422 / Vc1).